A 304-amino-acid chain; its full sequence is Non-specific ribonucleoside hydrolase RihC (304 aa).

His-233 is an active-site residue.

This sequence belongs to the IUNH family. RihC subfamily.

Its function is as follows. Hydrolyzes both purine and pyrimidine ribonucleosides with a broad-substrate specificity. This chain is Non-specific ribonucleoside hydrolase RihC, found in Shigella boydii serotype 4 (strain Sb227).